A 333-amino-acid polypeptide reads, in one-letter code: Ketol-acid reductoisomerase (NADP(+)) (333 aa).

In terms of domain architecture, KARI N-terminal Rossmann spans 1–179 (MFYDDDADLS…GGTRAGVIKT (179 aa)). NADP(+)-binding positions include 22–25 (YGSQ), K45, S48, S50, and 80–83 (DTAQ). H105 is an active-site residue. G131 serves as a coordination point for NADP(+). The 146-residue stretch at 180–325 (TFKDETETDL…KKLRDLMSWV (146 aa)) folds into the KARI C-terminal knotted domain. Residues D188, E192, E224, and E228 each contribute to the Mg(2+) site. Substrate is bound at residue S249.

Belongs to the ketol-acid reductoisomerase family. It depends on Mg(2+) as a cofactor.

The catalysed reaction is (2R)-2,3-dihydroxy-3-methylbutanoate + NADP(+) = (2S)-2-acetolactate + NADPH + H(+). It carries out the reaction (2R,3R)-2,3-dihydroxy-3-methylpentanoate + NADP(+) = (S)-2-ethyl-2-hydroxy-3-oxobutanoate + NADPH + H(+). Its pathway is amino-acid biosynthesis; L-isoleucine biosynthesis; L-isoleucine from 2-oxobutanoate: step 2/4. It functions in the pathway amino-acid biosynthesis; L-valine biosynthesis; L-valine from pyruvate: step 2/4. In terms of biological role, involved in the biosynthesis of branched-chain amino acids (BCAA). Catalyzes an alkyl-migration followed by a ketol-acid reduction of (S)-2-acetolactate (S2AL) to yield (R)-2,3-dihydroxy-isovalerate. In the isomerase reaction, S2AL is rearranged via a Mg-dependent methyl migration to produce 3-hydroxy-3-methyl-2-ketobutyrate (HMKB). In the reductase reaction, this 2-ketoacid undergoes a metal-dependent reduction by NADPH to yield (R)-2,3-dihydroxy-isovalerate. This is Ketol-acid reductoisomerase (NADP(+)) from Mycobacterium bovis (strain ATCC BAA-935 / AF2122/97).